The following is a 335-amino-acid chain: Ketol-acid reductoisomerase (NAD(P)(+)) (335 aa).

In terms of domain architecture, KARI N-terminal Rossmann spans 2–182 (AKIYKDEDIS…GCARAGVIES (181 aa)). Residues 25–28 (YGSQ), Arg-49, Ser-53, and 83–86 (DMVQ) contribute to the NADP(+) site. The active site involves His-108. Gly-134 contacts NADP(+). Positions 183-328 (TFKEETETDL…RKLREMMFRG (146 aa)) constitute a KARI C-terminal knotted domain. The Mg(2+) site is built by Asp-191, Glu-195, Glu-227, and Glu-231. Ser-252 contacts substrate.

Belongs to the ketol-acid reductoisomerase family. Homodimer. Requires Mg(2+) as cofactor.

It catalyses the reaction (2R)-2,3-dihydroxy-3-methylbutanoate + NAD(+) = (2S)-2-acetolactate + NADH + H(+). The enzyme catalyses (2R)-2,3-dihydroxy-3-methylbutanoate + NADP(+) = (2S)-2-acetolactate + NADPH + H(+). It participates in amino-acid biosynthesis; L-isoleucine biosynthesis; L-isoleucine from 2-oxobutanoate: step 2/4. It functions in the pathway amino-acid biosynthesis; L-valine biosynthesis; L-valine from pyruvate: step 2/4. Functionally, involved in the biosynthesis of branched-chain amino acids (BCAA). Catalyzes an alkyl-migration followed by a ketol-acid reduction of (S)-2-acetolactate (S2AL) to yield (R)-2,3-dihydroxy-isovalerate. In the isomerase reaction, S2AL is rearranged via a Mg-dependent methyl migration to produce 3-hydroxy-3-methyl-2-ketobutyrate (HMKB). In the reductase reaction, this 2-ketoacid undergoes a metal-dependent reduction by NADPH or NADH to yield (R)-2,3-dihydroxy-isovalerate. The chain is Ketol-acid reductoisomerase (NAD(P)(+)) from Ignisphaera aggregans (strain DSM 17230 / JCM 13409 / AQ1.S1).